Reading from the N-terminus, the 78-residue chain is Putative protein PeaD (78 aa).

Belongs to the phage P protein family.

The sequence is that of Putative protein PeaD (peaD) from Escherichia coli (strain K12).